A 55-amino-acid chain; its full sequence is MAVQQNKPTRSKRGMRRSHDALTTATLSVDKTSGETHLRHHITADGFYRGRKVIG.

The tract at residues 1–27 (MAVQQNKPTRSKRGMRRSHDALTTATL) is disordered.

It belongs to the bacterial ribosomal protein bL32 family.

The polypeptide is Large ribosomal subunit protein bL32 (Yersinia enterocolitica serotype O:8 / biotype 1B (strain NCTC 13174 / 8081)).